A 402-amino-acid polypeptide reads, in one-letter code: S-adenosylmethionine synthase (402 aa).

137-142 (GQGSAD) contacts ATP.

Belongs to the AdoMet synthase 2 family. The cofactor is Mg(2+).

It carries out the reaction L-methionine + ATP + H2O = S-adenosyl-L-methionine + phosphate + diphosphate. It functions in the pathway amino-acid biosynthesis; S-adenosyl-L-methionine biosynthesis; S-adenosyl-L-methionine from L-methionine: step 1/1. Its function is as follows. Catalyzes the formation of S-adenosylmethionine from methionine and ATP. The chain is S-adenosylmethionine synthase from Pyrobaculum calidifontis (strain DSM 21063 / JCM 11548 / VA1).